The following is a 102-amino-acid chain: Small ribosomal subunit protein uS10 (102 aa).

It belongs to the universal ribosomal protein uS10 family. Part of the 30S ribosomal subunit.

Functionally, involved in the binding of tRNA to the ribosomes. The chain is Small ribosomal subunit protein uS10 from Carboxydothermus hydrogenoformans (strain ATCC BAA-161 / DSM 6008 / Z-2901).